The primary structure comprises 466 residues: Glucose-6-phosphate 1-dehydrogenase 1 (466 aa).

NADP(+) contacts are provided by residues serine 48, 88-89 (DV), and lysine 141. Substrate-binding residues include histidine 171, lysine 175, glutamate 209, and aspartate 228. Residue histidine 233 is the Proton acceptor of the active site. Positions 319 and 324 each coordinate substrate.

It belongs to the glucose-6-phosphate dehydrogenase family.

The enzyme catalyses D-glucose 6-phosphate + NADP(+) = 6-phospho-D-glucono-1,5-lactone + NADPH + H(+). The protein operates within carbohydrate degradation; pentose phosphate pathway; D-ribulose 5-phosphate from D-glucose 6-phosphate (oxidative stage): step 1/3. Catalyzes the oxidation of glucose 6-phosphate to 6-phosphogluconolactone. The chain is Glucose-6-phosphate 1-dehydrogenase 1 from Mycobacterium tuberculosis (strain ATCC 25618 / H37Rv).